Reading from the N-terminus, the 325-residue chain is Lipoyl synthase (325 aa).

The tract at residues M1–P31 is disordered. Positions R17–P31 are enriched in basic and acidic residues. 7 residues coordinate [4Fe-4S] cluster: C65, C70, C76, C91, C95, C98, and S304. A Radical SAM core domain is found at W77–L293.

This sequence belongs to the radical SAM superfamily. Lipoyl synthase family. [4Fe-4S] cluster is required as a cofactor.

Its subcellular location is the cytoplasm. It carries out the reaction [[Fe-S] cluster scaffold protein carrying a second [4Fe-4S](2+) cluster] + N(6)-octanoyl-L-lysyl-[protein] + 2 oxidized [2Fe-2S]-[ferredoxin] + 2 S-adenosyl-L-methionine + 4 H(+) = [[Fe-S] cluster scaffold protein] + N(6)-[(R)-dihydrolipoyl]-L-lysyl-[protein] + 4 Fe(3+) + 2 hydrogen sulfide + 2 5'-deoxyadenosine + 2 L-methionine + 2 reduced [2Fe-2S]-[ferredoxin]. It functions in the pathway protein modification; protein lipoylation via endogenous pathway; protein N(6)-(lipoyl)lysine from octanoyl-[acyl-carrier-protein]: step 2/2. Functionally, catalyzes the radical-mediated insertion of two sulfur atoms into the C-6 and C-8 positions of the octanoyl moiety bound to the lipoyl domains of lipoate-dependent enzymes, thereby converting the octanoylated domains into lipoylated derivatives. In Maricaulis maris (strain MCS10) (Caulobacter maris), this protein is Lipoyl synthase.